We begin with the raw amino-acid sequence, 1336 residues long: SH3 domain and tetratricopeptide repeat-containing protein 1 (1336 aa).

Position 1 is an N-acetylmethionine (Met-1). Disordered stretches follow at residues 1–76 (MENL…PPCQ) and 225–266 (TGPR…SEEV). The span at 18–27 (GPVGPSGGGS) shows a compositional bias: gly residues. Residues 46-61 (AGPEEAKAPVRGDEAP) show a composition bias toward basic and acidic residues. Low complexity-rich tracts occupy residues 62–74 (PARV…GTPP) and 247–266 (EAAP…SEEV). In terms of domain architecture, SH3 spans 305–368 (MAVGLASALA…RSSLISMQGP (64 aa)). TPR repeat units follow at residues 560-593 (ARLC…LEGS), 601-634 (VAVY…LLGT), 665-698 (ARAC…HRDS), 786-819 (GPLY…SAIA), 863-896 (GVIA…ARDL), 946-979 (THVL…AVEM), 1027-1063 (GQLL…FIDL), and 1192-1225 (RVAY…CNSP). Tyr-1248 is subject to Phosphotyrosine. Residues 1277–1311 (LKIYTRLATIYHNFLLDREKSLFFYQKARTFATEL) form a TPR 9 repeat.

The protein is SH3 domain and tetratricopeptide repeat-containing protein 1 (SH3TC1) of Homo sapiens (Human).